The following is a 90-amino-acid chain: MSVKIRMHRAGAKRKPFYRIVVADSRMPRDGRFIEQVGYYNPVSQPKELKLDEDKIFDWLQKGAQPSDTVRSLLSGAGLMTKLHDAKYNK.

Belongs to the bacterial ribosomal protein bS16 family.

The polypeptide is Small ribosomal subunit protein bS16 (Lactobacillus helveticus (strain DPC 4571)).